The primary structure comprises 385 residues: Deoxyguanosinetriphosphate triphosphohydrolase-like protein (385 aa).

The HD domain maps to 75 to 197 (RLTHTLEVGQ…VDAADALAYT (123 aa)).

Belongs to the dGTPase family. Type 2 subfamily.

In Deinococcus geothermalis (strain DSM 11300 / CIP 105573 / AG-3a), this protein is Deoxyguanosinetriphosphate triphosphohydrolase-like protein.